We begin with the raw amino-acid sequence, 138 residues long: Nucleoside diphosphate kinase (138 aa).

Residues K10, F58, R86, T92, R103, and N113 each contribute to the ATP site. H116 functions as the Pros-phosphohistidine intermediate in the catalytic mechanism.

The protein belongs to the NDK family. As to quaternary structure, homotetramer. Mg(2+) serves as cofactor.

It localises to the cytoplasm. It catalyses the reaction a 2'-deoxyribonucleoside 5'-diphosphate + ATP = a 2'-deoxyribonucleoside 5'-triphosphate + ADP. It carries out the reaction a ribonucleoside 5'-diphosphate + ATP = a ribonucleoside 5'-triphosphate + ADP. Major role in the synthesis of nucleoside triphosphates other than ATP. The ATP gamma phosphate is transferred to the NDP beta phosphate via a ping-pong mechanism, using a phosphorylated active-site intermediate. The polypeptide is Nucleoside diphosphate kinase (Glaesserella parasuis serovar 5 (strain SH0165) (Haemophilus parasuis)).